A 52-amino-acid chain; its full sequence is Phospholamban (52 aa).

N-acetylmethionine is present on Met1. The Cytoplasmic segment spans residues 1 to 31 (MDKVQYLTRSAIRRASTIEMPQQARQNLQNL). Ser16 carries the post-translational modification Phosphoserine; by PKA and DMPK. The residue at position 17 (Thr17) is a Phosphothreonine; by CaMK2. Residues 32-52 (FINFCLILICLLLICIIVMLL) form a helical membrane-spanning segment. Cys36 is lipidated: S-palmitoyl cysteine.

This sequence belongs to the phospholamban family. In terms of assembly, homopentamer. Can also form heterooligomers with other sarcoplasmic/endoplasmic reticulum calcium ATPase (SERCA) regulators ARLN, ERLN, SLN and STRIT1/DWORF. Monomer. Interacts with HAX1. Interacts as a monomer with ATP2A2; the interaction decreases ATP2A2 Ca(2+) affinity. Interacts with VMP1; VMP1 competes with PLN and SLN to prevent them from forming an inhibitory complex with ATP2A2. Interacts with S100A1 in a Ca(2+)-dependent manner. In terms of processing, phosphorylation by DMPK may stimulate sarcoplasmic reticulum calcium uptake in cardiomyocytes. Phosphorylation by PKA abolishes the inhibition of ATP2A2-mediated calcium uptake. Phosphorylated at Thr-17 by CaMK2, and in response to beta-adrenergic stimulation. Post-translationally, palmitoylated by ZDHHC16, promoting formation of the homopentamer. In elongated spermatids, proteolytically cleaved by SPPL2C which modulates intracellular Ca(2+) homeostasis. In terms of tissue distribution, heart.

It localises to the endoplasmic reticulum membrane. The protein localises to the sarcoplasmic reticulum membrane. It is found in the mitochondrion membrane. Its subcellular location is the membrane. Reversibly inhibits the activity of ATP2A2/SERCA2 in cardiac sarcoplasmic reticulum by decreasing the apparent affinity of the ATPase for Ca(2+). Binds preferentially to the ATP-bound E1 conformational form of ATP2A2 which predominates at low Ca(2+) concentrations during the diastolic phase of the cardiac cycle. Inhibits ATP2A2 Ca(2+) affinity by disrupting its allosteric activation by ATP. Modulates the contractility of the heart muscle in response to physiological stimuli via its effects on ATP2A2. Modulates calcium re-uptake during muscle relaxation and plays an important role in calcium homeostasis in the heart muscle. The degree of ATP2A2 inhibition depends on the oligomeric state of PLN. ATP2A2 inhibition is alleviated by PLN phosphorylation. Also inhibits the activity of ATP2A3/SERCA3. Controls intracellular Ca(2+) levels in elongated spermatids and may play a role in germ cell differentiation. In the thalamic reticular nucleus of the brain, plays a role in the regulation of sleep patterns and executive functioning. The chain is Phospholamban from Canis lupus familiaris (Dog).